We begin with the raw amino-acid sequence, 669 residues long: uncharacterized protein (669 aa).

The next 6 membrane-spanning stretches (helical) occupy residues 39–61 (LCPLLVALAILFSLTAVSSGTSW), 124–146 (ISLWGISLGPTAGTLLVGVLISI), 153–175 (GIIYGIPSIVSTIFLLMFMYALG), 190–212 (GLAFIVIGLIVWSLNWLICFFGV), 221–243 (FAPGIISGSYTITAIIGVAQTAL), and 263–285 (IAAGYAISYVLSNIGIILLIRYL). RCK C-terminal domains follow at residues 316-397 (AGSL…KLIG) and 398-483 (KESD…LGGR). The next 5 membrane-spanning stretches (helical) occupy residues 484–506 (PILNSSITEVMYMAIAMGIGYIF), 516–538 (IPFALGTSAGCLLAGIFMSYWRS), 558–580 (IGLNLFVAVLAAAVGPKIIESFH), 585–607 (IWVAIIGILGALVPPLVAFVVGI), and 645–667 (VPYPLTYALTTVLALVGGYFAML).

It belongs to the AAE transporter (TC 2.A.81) family.

The protein resides in the cell membrane. This is an uncharacterized protein from Desulfotalea psychrophila (strain LSv54 / DSM 12343).